The primary structure comprises 232 residues: MSVCQTPIIVALDYPTRDAALKLADQLDPKLCRVKVGKELFTSCAAEIVGTLRDKGFEVFLDLKFHDIPNTTAMAVKAAAEMGVWMVNVHCSGGLRMMTACREVLEQRSGPKPLLIGVTVLTSMEREDLAGIGLDIEPQEQVLRLAALAQKAGLDGLVCSALEAQALKTAHPSLQLVTPGIRPAGSAQDDQRRILTPRQALDAGSDYLVIGRPISQAADPAKALADVVAEIA.

Substrate is bound by residues D13, K35, 62 to 71, T122, R182, Q191, G211, and R212; that span reads DLKFHDIPNT. K64 serves as the catalytic Proton donor.

This sequence belongs to the OMP decarboxylase family. Type 1 subfamily. In terms of assembly, homodimer.

The enzyme catalyses orotidine 5'-phosphate + H(+) = UMP + CO2. It participates in pyrimidine metabolism; UMP biosynthesis via de novo pathway; UMP from orotate: step 2/2. In terms of biological role, catalyzes the decarboxylation of orotidine 5'-monophosphate (OMP) to uridine 5'-monophosphate (UMP). This chain is Orotidine 5'-phosphate decarboxylase, found in Pseudomonas fluorescens (strain SBW25).